Here is a 239-residue protein sequence, read N- to C-terminus: Orotidine 5'-phosphate decarboxylase (239 aa).

Residues aspartate 15, lysine 36, 63 to 72 (DLKFHDIPNT), threonine 127, arginine 189, glutamine 198, glycine 218, and arginine 219 contribute to the substrate site. Lysine 65 serves as the catalytic Proton donor.

Belongs to the OMP decarboxylase family. Type 1 subfamily. In terms of assembly, homodimer.

The enzyme catalyses orotidine 5'-phosphate + H(+) = UMP + CO2. Its pathway is pyrimidine metabolism; UMP biosynthesis via de novo pathway; UMP from orotate: step 2/2. Functionally, catalyzes the decarboxylation of orotidine 5'-monophosphate (OMP) to uridine 5'-monophosphate (UMP). The chain is Orotidine 5'-phosphate decarboxylase from Prochlorococcus marinus (strain MIT 9515).